Consider the following 313-residue polypeptide: Ribosomal RNA small subunit methyltransferase H (313 aa).

S-adenosyl-L-methionine is bound by residues 33–35 (AGH), Asp53, Phe82, Asp103, and Gln110.

It belongs to the methyltransferase superfamily. RsmH family.

Its subcellular location is the cytoplasm. It carries out the reaction cytidine(1402) in 16S rRNA + S-adenosyl-L-methionine = N(4)-methylcytidine(1402) in 16S rRNA + S-adenosyl-L-homocysteine + H(+). Functionally, specifically methylates the N4 position of cytidine in position 1402 (C1402) of 16S rRNA. The chain is Ribosomal RNA small subunit methyltransferase H from Acetivibrio thermocellus (strain ATCC 27405 / DSM 1237 / JCM 9322 / NBRC 103400 / NCIMB 10682 / NRRL B-4536 / VPI 7372) (Clostridium thermocellum).